The chain runs to 269 residues: MKVYAVLGDPIEHSLSPVMHNAAFQAMGLQASYHAFRVKIPRLRDAILGADAMGFGGLNLTIPLKESAISVVEPDETAEAIGAANTVSFQRGIRGHNTDGIGASLALRHYGVNVRGADVLLIGAGGAARAIAYQLSKDGAEIVVTNRTPERGLALASDLGLEFRPFGEIDDLVRVSDVVINATSVGMRDGDPRLFDGSILKAEQVVFDIIYSRETELLRDARRAGAKAIDGVMMLVYQGAAAFRIWTGLDEPVDVMEAAVRAALGRLNL.

Shikimate is bound by residues 14–16 (SLS) and Thr-61. The active-site Proton acceptor is Lys-65. Glu-76 contributes to the NADP(+) binding site. Shikimate-binding residues include Asn-85 and Asp-99. NADP(+) is bound by residues 123–127 (GAGGA), 146–151 (NRTPER), and Ile-209. Residue Tyr-211 coordinates shikimate. Gly-231 lines the NADP(+) pocket.

The protein belongs to the shikimate dehydrogenase family. As to quaternary structure, homodimer.

It catalyses the reaction shikimate + NADP(+) = 3-dehydroshikimate + NADPH + H(+). Its pathway is metabolic intermediate biosynthesis; chorismate biosynthesis; chorismate from D-erythrose 4-phosphate and phosphoenolpyruvate: step 4/7. Its function is as follows. Involved in the biosynthesis of the chorismate, which leads to the biosynthesis of aromatic amino acids. Catalyzes the reversible NADPH linked reduction of 3-dehydroshikimate (DHSA) to yield shikimate (SA). The protein is Shikimate dehydrogenase (NADP(+)) of Methanothrix thermoacetophila (strain DSM 6194 / JCM 14653 / NBRC 101360 / PT) (Methanosaeta thermophila).